Here is a 685-residue protein sequence, read N- to C-terminus: Probable transcriptional regulator SLK3 (685 aa).

Disordered regions lie at residues Asn-25–Tyr-66 and Leu-108–Leu-129. Over residues Gln-39–Gln-56 the composition is skewed to low complexity. Residues Pro-176 to Leu-423 form a dimerization region. The short motif at Arg-185–Arg-199 is the Nuclear localization signal element. Positions Gly-447–Gln-459 are enriched in polar residues. 3 disordered regions span residues Gly-447–Ser-491, Asn-512–Glu-591, and Gln-611–Pro-658. Residues Met-460–Thr-471 are compositionally biased toward low complexity. The segment covering Asn-512–Phe-524 has biased composition (polar residues). The segment covering Ser-525–Gln-543 has biased composition (low complexity). Composition is skewed to polar residues over residues Arg-544–Asn-588, Gln-611–Ile-636, and Arg-645–Pro-658.

It belongs to the adn1/SEU family.

The protein resides in the nucleus. In terms of biological role, probable transcription regulator that functions in the development of the carpel margin meristem similarly to SEUSS (SEU). In association with SEU, supports organ development from meristematic regions by facilitating auxin response and thus organ initiation, and by sustaining meristematic potential through the maintenance of PHABULOSA expression. The polypeptide is Probable transcriptional regulator SLK3 (SLK3) (Arabidopsis thaliana (Mouse-ear cress)).